The chain runs to 404 residues: 8-amino-7-oxononanoate synthase (404 aa).

Residue Arg-20 participates in substrate binding. 116-117 provides a ligand contact to pyridoxal 5'-phosphate; the sequence is GY. Position 141 (His-141) interacts with substrate. Pyridoxal 5'-phosphate contacts are provided by Ser-187, His-215, and Thr-243. Residue Lys-246 is modified to N6-(pyridoxal phosphate)lysine. Thr-366 is a substrate binding site.

This sequence belongs to the class-II pyridoxal-phosphate-dependent aminotransferase family. BioF subfamily. Homodimer. Pyridoxal 5'-phosphate serves as cofactor.

The catalysed reaction is 6-carboxyhexanoyl-[ACP] + L-alanine + H(+) = (8S)-8-amino-7-oxononanoate + holo-[ACP] + CO2. Its pathway is cofactor biosynthesis; biotin biosynthesis. Catalyzes the decarboxylative condensation of pimeloyl-[acyl-carrier protein] and L-alanine to produce 8-amino-7-oxononanoate (AON), [acyl-carrier protein], and carbon dioxide. This Cupriavidus necator (strain ATCC 17699 / DSM 428 / KCTC 22496 / NCIMB 10442 / H16 / Stanier 337) (Ralstonia eutropha) protein is 8-amino-7-oxononanoate synthase.